A 491-amino-acid chain; its full sequence is Peptidoglycan D,D-transpeptidase PbpA (491 aa).

Topologically, residues methionine 1–arginine 7 are cytoplasmic. The helical; Signal-anchor for type II membrane protein transmembrane segment at isoleucine 8 to valine 28 threads the bilayer. Residues phenylalanine 29 to proline 491 lie on the Periplasmic side of the membrane. The transpeptidase stretch occupies residues glycine 160 to glutamate 484. Serine 222 acts as the Acyl-ester intermediate in catalysis.

Belongs to the transpeptidase family.

The protein localises to the cell inner membrane. It carries out the reaction Preferential cleavage: (Ac)2-L-Lys-D-Ala-|-D-Ala. Also transpeptidation of peptidyl-alanyl moieties that are N-acyl substituents of D-alanine.. The protein operates within cell wall biogenesis; peptidoglycan biosynthesis. In terms of biological role, transpeptidase that catalyzes cross-linking of the peptidoglycan cell wall. Required for the regulation of cell length. This is Peptidoglycan D,D-transpeptidase PbpA (pbpA) from Mycobacterium tuberculosis (strain CDC 1551 / Oshkosh).